The following is a 625-amino-acid chain: Threonine--tRNA ligase (625 aa).

The interval 1–143 (MRILLIHSDY…ELSRTIIPEG (143 aa)) is editing domain. Residues 206 to 505 (PHVKLMLEHE…MQEGKKPMLP (300 aa)) are catalytic. Zn(2+) contacts are provided by cysteine 298, histidine 350, and histidine 474.

Belongs to the class-II aminoacyl-tRNA synthetase family. In terms of assembly, homodimer. The cofactor is Zn(2+).

The protein resides in the cytoplasm. It catalyses the reaction tRNA(Thr) + L-threonine + ATP = L-threonyl-tRNA(Thr) + AMP + diphosphate + H(+). Catalyzes the attachment of threonine to tRNA(Thr) in a two-step reaction: L-threonine is first activated by ATP to form Thr-AMP and then transferred to the acceptor end of tRNA(Thr). Also edits incorrectly charged L-seryl-tRNA(Thr). This is Threonine--tRNA ligase from Pyrococcus horikoshii (strain ATCC 700860 / DSM 12428 / JCM 9974 / NBRC 100139 / OT-3).